A 390-amino-acid polypeptide reads, in one-letter code: S-adenosylmethionine synthase 1 (390 aa).

Residue E9 participates in Mg(2+) binding. H15 contributes to the ATP binding site. E43 serves as a coordination point for K(+). 2 residues coordinate L-methionine: E56 and Q99. ATP-binding positions include 167 to 169 (DGK), 235 to 238 (SGRF), D246, 252 to 253 (RK), A269, K273, and K277. D246 serves as a coordination point for L-methionine. L-methionine is bound at residue K277.

This sequence belongs to the AdoMet synthase family. In terms of assembly, homotetramer. Mn(2+) serves as cofactor. Requires Mg(2+) as cofactor. It depends on Co(2+) as a cofactor. K(+) is required as a cofactor.

The protein localises to the cytoplasm. The catalysed reaction is L-methionine + ATP + H2O = S-adenosyl-L-methionine + phosphate + diphosphate. It functions in the pathway amino-acid biosynthesis; S-adenosyl-L-methionine biosynthesis; S-adenosyl-L-methionine from L-methionine: step 1/1. Its function is as follows. Catalyzes the formation of S-adenosylmethionine from methionine and ATP. The reaction comprises two steps that are both catalyzed by the same enzyme: formation of S-adenosylmethionine (AdoMet) and triphosphate, and subsequent hydrolysis of the triphosphate. In Nicotiana tabacum (Common tobacco), this protein is S-adenosylmethionine synthase 1 (SAMS1).